Reading from the N-terminus, the 235-residue chain is Large ribosomal subunit protein uL1 (235 aa).

It belongs to the universal ribosomal protein uL1 family. Part of the 50S ribosomal subunit.

Functionally, binds directly to 23S rRNA. The L1 stalk is quite mobile in the ribosome, and is involved in E site tRNA release. Protein L1 is also a translational repressor protein, it controls the translation of the L11 operon by binding to its mRNA. This chain is Large ribosomal subunit protein uL1, found in Mycobacterium leprae (strain Br4923).